We begin with the raw amino-acid sequence, 370 residues long: MGSSLPFDLILEILQRTPAESLLRFKSTCKKWYELISNDKRFMYKHLDKSTKRFLRIENRERVQILDPVTEILAVSTIPNELRHKYFTLIHCDGLMLGMCYEELGSDPNLAVWNPVMRKIKWIKPSPPLVCYWGSDYLGFGYDKTFRDNYKILRFTYLGDDDDDESYPKCQIYEFNSGSWRSIEAKFDGEIDVEVDGVSVNGSMYWIELQEKKNFILSFDFSKETFNRICDSPLYWDIKRLGCFNGDRLSLLQQNEATREIHVSVTNKLSDEVVSFSRYFSVTLPDIPLFRSIDILPLPGCFIGKNRNIIAWCEQLVGKYDDHTSIILYEIGEGGVTKRIRTGRHEADEDYNDLDNCSYVYVPSLIPVPE.

An F-box domain is found at 1–47 (MGSSLPFDLILEILQRTPAESLLRFKSTCKKWYELISNDKRFMYKHL).

This Arabidopsis thaliana (Mouse-ear cress) protein is Putative F-box protein At3g10430.